A 588-amino-acid chain; its full sequence is Aspartate--tRNA ligase (588 aa).

Residue Glu-174 participates in L-aspartate binding. The interval 198–201 (QLFK) is aspartate. L-aspartate is bound at residue Arg-220. Residues 220–222 (RDE) and Gln-229 each bind ATP. His-448 contacts L-aspartate. ATP is bound at residue Glu-482. Arg-489 provides a ligand contact to L-aspartate. 534-537 (GLDR) is an ATP binding site.

It belongs to the class-II aminoacyl-tRNA synthetase family. Type 1 subfamily. As to quaternary structure, homodimer.

It is found in the cytoplasm. It catalyses the reaction tRNA(Asp) + L-aspartate + ATP = L-aspartyl-tRNA(Asp) + AMP + diphosphate. Functionally, catalyzes the attachment of L-aspartate to tRNA(Asp) in a two-step reaction: L-aspartate is first activated by ATP to form Asp-AMP and then transferred to the acceptor end of tRNA(Asp). This chain is Aspartate--tRNA ligase, found in Exiguobacterium sibiricum (strain DSM 17290 / CCUG 55495 / CIP 109462 / JCM 13490 / 255-15).